The following is a 271-amino-acid chain: 3-methyl-2-oxobutanoate hydroxymethyltransferase (271 aa).

Mg(2+)-binding residues include D53 and D92. 3-methyl-2-oxobutanoate contacts are provided by residues 53–54, D92, and K120; that span reads DS. Mg(2+) is bound at residue E122. The Proton acceptor role is filled by E189.

The protein belongs to the PanB family. In terms of assembly, homodecamer; pentamer of dimers. Mg(2+) serves as cofactor.

Its subcellular location is the cytoplasm. The enzyme catalyses 3-methyl-2-oxobutanoate + (6R)-5,10-methylene-5,6,7,8-tetrahydrofolate + H2O = 2-dehydropantoate + (6S)-5,6,7,8-tetrahydrofolate. It functions in the pathway cofactor biosynthesis; (R)-pantothenate biosynthesis; (R)-pantoate from 3-methyl-2-oxobutanoate: step 1/2. Its function is as follows. Catalyzes the reversible reaction in which hydroxymethyl group from 5,10-methylenetetrahydrofolate is transferred onto alpha-ketoisovalerate to form ketopantoate. The polypeptide is 3-methyl-2-oxobutanoate hydroxymethyltransferase (Burkholderia multivorans (strain ATCC 17616 / 249)).